The chain runs to 278 residues: 4-deoxy-L-threo-5-hexosulose-uronate ketol-isomerase (278 aa).

The Zn(2+) site is built by histidine 196, histidine 198, glutamate 203, and histidine 245.

This sequence belongs to the KduI family. Zn(2+) is required as a cofactor.

It catalyses the reaction 5-dehydro-4-deoxy-D-glucuronate = 3-deoxy-D-glycero-2,5-hexodiulosonate. It participates in glycan metabolism; pectin degradation; 2-dehydro-3-deoxy-D-gluconate from pectin: step 4/5. Functionally, catalyzes the isomerization of 5-dehydro-4-deoxy-D-glucuronate to 3-deoxy-D-glycero-2,5-hexodiulosonate. The sequence is that of 4-deoxy-L-threo-5-hexosulose-uronate ketol-isomerase from Salmonella agona (strain SL483).